The following is a 98-amino-acid chain: Small ribosomal subunit protein bS20 (98 aa).

The protein belongs to the bacterial ribosomal protein bS20 family.

Binds directly to 16S ribosomal RNA. This chain is Small ribosomal subunit protein bS20, found in Kosmotoga olearia (strain ATCC BAA-1733 / DSM 21960 / TBF 19.5.1).